We begin with the raw amino-acid sequence, 1060 residues long: DNA-directed RNA polymerase subunit beta (1060 aa).

This sequence belongs to the RNA polymerase beta chain family. In terms of assembly, in plastids the minimal PEP RNA polymerase catalytic core is composed of four subunits: alpha, beta, beta', and beta''. When a (nuclear-encoded) sigma factor is associated with the core the holoenzyme is formed, which can initiate transcription.

Its subcellular location is the plastid. It localises to the chloroplast. It carries out the reaction RNA(n) + a ribonucleoside 5'-triphosphate = RNA(n+1) + diphosphate. DNA-dependent RNA polymerase catalyzes the transcription of DNA into RNA using the four ribonucleoside triphosphates as substrates. This is DNA-directed RNA polymerase subunit beta from Helianthus annuus (Common sunflower).